A 368-amino-acid chain; its full sequence is Probable dual-specificity RNA methyltransferase RlmN (368 aa).

Glu-100 (proton acceptor) is an active-site residue. Positions 106-344 constitute a Radical SAM core domain; the sequence is QHYGLSVCVT…CVVRQEHGTD (239 aa). A disulfide bond links Cys-113 and Cys-349. 3 residues coordinate [4Fe-4S] cluster: Cys-120, Cys-124, and Cys-127. S-adenosyl-L-methionine-binding positions include 172–173, Ser-204, 227–229, and Asn-305; these read GE and SLH. Cys-349 acts as the S-methylcysteine intermediate in catalysis.

The protein belongs to the radical SAM superfamily. RlmN family. It depends on [4Fe-4S] cluster as a cofactor.

The protein resides in the cytoplasm. The catalysed reaction is adenosine(2503) in 23S rRNA + 2 reduced [2Fe-2S]-[ferredoxin] + 2 S-adenosyl-L-methionine = 2-methyladenosine(2503) in 23S rRNA + 5'-deoxyadenosine + L-methionine + 2 oxidized [2Fe-2S]-[ferredoxin] + S-adenosyl-L-homocysteine. It catalyses the reaction adenosine(37) in tRNA + 2 reduced [2Fe-2S]-[ferredoxin] + 2 S-adenosyl-L-methionine = 2-methyladenosine(37) in tRNA + 5'-deoxyadenosine + L-methionine + 2 oxidized [2Fe-2S]-[ferredoxin] + S-adenosyl-L-homocysteine. Specifically methylates position 2 of adenine 2503 in 23S rRNA and position 2 of adenine 37 in tRNAs. In Streptococcus agalactiae serotype Ia (strain ATCC 27591 / A909 / CDC SS700), this protein is Probable dual-specificity RNA methyltransferase RlmN.